The primary structure comprises 161 residues: MSSKFLILLAFCGATLVAAEQLPEKFYGTFDLDHSENFDEYLTAKGYGWFTRKLVTFATFKKVFAKNANKNLFDYSNLTSKKDVFYKNVQIGSKFEGEGLDNTKHEVTFTLKDGHLFEHHKPLEEGESKEETYEYYFDGDFLIQKMSFNNIEGRRFYKRLP.

The signal sequence occupies residues 1–19 (MSSKFLILLAFCGATLVAA).

The protein belongs to the calycin superfamily. Fatty-acid binding protein (FABP) family.

It is found in the secreted. Functionally, may play a role in sequestering potentially toxic fatty acids and their peroxidation products, or it may be involved in the maintenance of the impermeable lipid layer of the eggshell. In Caenorhabditis elegans, this protein is Fatty acid-binding protein homolog 2 (lbp-2).